The following is a 196-amino-acid chain: Ribonuclease HII (196 aa).

In terms of domain architecture, RNase H type-2 spans 13–196 (LLVAGVDEAG…SFSPLKKKLF (184 aa)). Residues Asp-19, Glu-20, and Asp-111 each coordinate a divalent metal cation.

This sequence belongs to the RNase HII family. The cofactor is Mn(2+). Mg(2+) is required as a cofactor.

It is found in the cytoplasm. The enzyme catalyses Endonucleolytic cleavage to 5'-phosphomonoester.. Functionally, endonuclease that specifically degrades the RNA of RNA-DNA hybrids. This chain is Ribonuclease HII (rnhB), found in Aquifex aeolicus (strain VF5).